The primary structure comprises 232 residues: Ion-translocating oxidoreductase complex subunit E (232 aa).

The next 5 helical transmembrane spans lie at L39–L59, I69–A89, F92–V112, A125–L145, and P182–V202.

It belongs to the NqrDE/RnfAE family. As to quaternary structure, the complex is composed of six subunits: RnfA, RnfB, RnfC, RnfD, RnfE and RnfG.

It localises to the cell inner membrane. Its function is as follows. Part of a membrane-bound complex that couples electron transfer with translocation of ions across the membrane. The chain is Ion-translocating oxidoreductase complex subunit E from Klebsiella pneumoniae (strain 342).